The following is a 295-amino-acid chain: ATP synthase gamma chain (295 aa).

This sequence belongs to the ATPase gamma chain family. As to quaternary structure, F-type ATPases have 2 components, CF(1) - the catalytic core - and CF(0) - the membrane proton channel. CF(1) has five subunits: alpha(3), beta(3), gamma(1), delta(1), epsilon(1). CF(0) has three main subunits: a, b and c.

It localises to the cell inner membrane. In terms of biological role, produces ATP from ADP in the presence of a proton gradient across the membrane. The gamma chain is believed to be important in regulating ATPase activity and the flow of protons through the CF(0) complex. This chain is ATP synthase gamma chain, found in Maricaulis maris (strain MCS10) (Caulobacter maris).